The primary structure comprises 214 residues: Thiamine-phosphate synthase (214 aa).

4-amino-2-methyl-5-(diphosphooxymethyl)pyrimidine contacts are provided by residues 37–41 (QLRDK) and asparagine 69. Mg(2+)-binding residues include aspartate 70 and aspartate 89. Serine 108 contributes to the 4-amino-2-methyl-5-(diphosphooxymethyl)pyrimidine binding site. 2-[(2R,5Z)-2-carboxy-4-methylthiazol-5(2H)-ylidene]ethyl phosphate is bound at residue 134–136 (TDS). 4-amino-2-methyl-5-(diphosphooxymethyl)pyrimidine is bound at residue lysine 137. 2-[(2R,5Z)-2-carboxy-4-methylthiazol-5(2H)-ylidene]ethyl phosphate is bound by residues glycine 167 and 187-188 (IS).

It belongs to the thiamine-phosphate synthase family. Mg(2+) serves as cofactor.

The enzyme catalyses 2-[(2R,5Z)-2-carboxy-4-methylthiazol-5(2H)-ylidene]ethyl phosphate + 4-amino-2-methyl-5-(diphosphooxymethyl)pyrimidine + 2 H(+) = thiamine phosphate + CO2 + diphosphate. The catalysed reaction is 2-(2-carboxy-4-methylthiazol-5-yl)ethyl phosphate + 4-amino-2-methyl-5-(diphosphooxymethyl)pyrimidine + 2 H(+) = thiamine phosphate + CO2 + diphosphate. It carries out the reaction 4-methyl-5-(2-phosphooxyethyl)-thiazole + 4-amino-2-methyl-5-(diphosphooxymethyl)pyrimidine + H(+) = thiamine phosphate + diphosphate. Its pathway is cofactor biosynthesis; thiamine diphosphate biosynthesis; thiamine phosphate from 4-amino-2-methyl-5-diphosphomethylpyrimidine and 4-methyl-5-(2-phosphoethyl)-thiazole: step 1/1. Condenses 4-methyl-5-(beta-hydroxyethyl)thiazole monophosphate (THZ-P) and 2-methyl-4-amino-5-hydroxymethyl pyrimidine pyrophosphate (HMP-PP) to form thiamine monophosphate (TMP). This Natronomonas pharaonis (strain ATCC 35678 / DSM 2160 / CIP 103997 / JCM 8858 / NBRC 14720 / NCIMB 2260 / Gabara) (Halobacterium pharaonis) protein is Thiamine-phosphate synthase.